Reading from the N-terminus, the 254-residue chain is MLAKRIIPCLDVTAGRVVKGVNFVGLRDAGDPVEIARRYNEQGADELTFLDITASSDARDIILHVIEAVAEQVFIPLTVGGGVRQVEDVRRLLNAGADKVSINTSAVTHPELVAEAAGRFGSQAIVVAVDAKAVTPDNDRWEVFTHGGRKPTGLDAVEWARKMQELGAGEILLTSMDRDGTRIGFNLALTRAVSDAVDIPVIASGGVGNLQHLVDGIKEGHADAVLAASIFHFGDYTVRQAKELMQSQGIEVRL.

Residues Asp11 and Asp130 contribute to the active site.

It belongs to the HisA/HisF family. In terms of assembly, heterodimer of HisH and HisF.

It is found in the cytoplasm. The catalysed reaction is 5-[(5-phospho-1-deoxy-D-ribulos-1-ylimino)methylamino]-1-(5-phospho-beta-D-ribosyl)imidazole-4-carboxamide + L-glutamine = D-erythro-1-(imidazol-4-yl)glycerol 3-phosphate + 5-amino-1-(5-phospho-beta-D-ribosyl)imidazole-4-carboxamide + L-glutamate + H(+). Its pathway is amino-acid biosynthesis; L-histidine biosynthesis; L-histidine from 5-phospho-alpha-D-ribose 1-diphosphate: step 5/9. IGPS catalyzes the conversion of PRFAR and glutamine to IGP, AICAR and glutamate. The HisF subunit catalyzes the cyclization activity that produces IGP and AICAR from PRFAR using the ammonia provided by the HisH subunit. This chain is Imidazole glycerol phosphate synthase subunit HisF, found in Laribacter hongkongensis (strain HLHK9).